A 103-amino-acid chain; its full sequence is Co-chaperonin GroES (103 aa).

This sequence belongs to the GroES chaperonin family. As to quaternary structure, heptamer of 7 subunits arranged in a ring. Interacts with the chaperonin GroEL.

The protein localises to the cytoplasm. Functionally, together with the chaperonin GroEL, plays an essential role in assisting protein folding. The GroEL-GroES system forms a nano-cage that allows encapsulation of the non-native substrate proteins and provides a physical environment optimized to promote and accelerate protein folding. GroES binds to the apical surface of the GroEL ring, thereby capping the opening of the GroEL channel. In Synechococcus sp. (strain CC9605), this protein is Co-chaperonin GroES.